The following is a 508-amino-acid chain: Photosystem II CP47 reaction center protein (508 aa).

6 helical membrane passes run 21–36, 101–115, 140–156, 203–218, 237–252, and 457–472; these read AVHIMHTALVSGWAGS, IVFSGLCFLAAIWHW, GIHLFLSGLACFGFGAF, IAAGTLGILAGLFHLS, VLSSSIAAVFFAAFVV, and SFALLFFFGHIWHGAR.

The protein belongs to the PsbB/PsbC family. PsbB subfamily. PSII is composed of 1 copy each of membrane proteins PsbA, PsbB, PsbC, PsbD, PsbE, PsbF, PsbH, PsbI, PsbJ, PsbK, PsbL, PsbM, PsbT, PsbX, PsbY, PsbZ, Psb30/Ycf12, at least 3 peripheral proteins of the oxygen-evolving complex and a large number of cofactors. It forms dimeric complexes. The cofactor is Binds multiple chlorophylls. PSII binds additional chlorophylls, carotenoids and specific lipids..

Its subcellular location is the plastid. It localises to the chloroplast thylakoid membrane. One of the components of the core complex of photosystem II (PSII). It binds chlorophyll and helps catalyze the primary light-induced photochemical processes of PSII. PSII is a light-driven water:plastoquinone oxidoreductase, using light energy to abstract electrons from H(2)O, generating O(2) and a proton gradient subsequently used for ATP formation. In Nandina domestica (Heavenly bamboo), this protein is Photosystem II CP47 reaction center protein.